We begin with the raw amino-acid sequence, 417 residues long: Serine hydroxymethyltransferase (417 aa).

Residues L121 and 125–127 (GHL) each bind (6S)-5,6,7,8-tetrahydrofolate. K229 is modified (N6-(pyridoxal phosphate)lysine). Residue 355-357 (SPF) participates in (6S)-5,6,7,8-tetrahydrofolate binding.

This sequence belongs to the SHMT family. As to quaternary structure, homodimer. Requires pyridoxal 5'-phosphate as cofactor.

It is found in the cytoplasm. It carries out the reaction (6R)-5,10-methylene-5,6,7,8-tetrahydrofolate + glycine + H2O = (6S)-5,6,7,8-tetrahydrofolate + L-serine. The protein operates within one-carbon metabolism; tetrahydrofolate interconversion. It participates in amino-acid biosynthesis; glycine biosynthesis; glycine from L-serine: step 1/1. In terms of biological role, catalyzes the reversible interconversion of serine and glycine with tetrahydrofolate (THF) serving as the one-carbon carrier. This reaction serves as the major source of one-carbon groups required for the biosynthesis of purines, thymidylate, methionine, and other important biomolecules. Also exhibits THF-independent aldolase activity toward beta-hydroxyamino acids, producing glycine and aldehydes, via a retro-aldol mechanism. This chain is Serine hydroxymethyltransferase, found in Buchnera aphidicola subsp. Acyrthosiphon pisum (strain APS) (Acyrthosiphon pisum symbiotic bacterium).